The following is a 499-amino-acid chain: Protein dml1 (499 aa).

It belongs to the misato family.

The protein resides in the mitochondrion. In terms of biological role, involved in the partitioning of the mitochondrial organelle and mitochondrial DNA (mtDNA) inheritance. This is Protein dml1 (dml1) from Aspergillus clavatus (strain ATCC 1007 / CBS 513.65 / DSM 816 / NCTC 3887 / NRRL 1 / QM 1276 / 107).